Reading from the N-terminus, the 65-residue chain is Large ribosomal subunit protein bL35 (65 aa).

Positions 1-22 are disordered; it reads MPKIKTLRSAAKRFKKTASGKF. Residues 10–22 show a composition bias toward basic residues; the sequence is AAKRFKKTASGKF.

Belongs to the bacterial ribosomal protein bL35 family.

In Buchnera aphidicola subsp. Schizaphis graminum (strain Sg), this protein is Large ribosomal subunit protein bL35.